A 1178-amino-acid chain; its full sequence is Pesticidal crystal protein Cry1Ac (1178 aa).

Belongs to the delta endotoxin family.

Its function is as follows. Promotes colloidosmotic lysis by binding to the midgut epithelial cells of many lepidopteran larvae. This is Pesticidal crystal protein Cry1Ac (cry1Ac) from Bacillus thuringiensis subsp. kurstaki.